Here is a 259-residue protein sequence, read N- to C-terminus: Src-like-adapter 2 (259 aa).

The segment covering 1–20 (MGSLSSRGKTSSPSPSSSGP) has biased composition (low complexity). The tract at residues 1–30 (MGSLSSRGKTSSPSPSSSGPDQEPVSMQPE) is disordered. G2 carries the N-myristoyl glycine lipid modification. The region spanning 31 to 91 (RHKVTAVALG…PSVYVAKVAH (61 aa)) is the SH3 domain. Positions 93–190 (WLYEGLSREK…GICCPLREPC (98 aa)) constitute an SH2 domain. An SLA C-terminal region spans residues 190–259 (CVLQKLGPLP…SLAEDPLDDA (70 aa)).

In terms of assembly, interacts (via its C-terminal domain) with CBL (phosphorylated). Interacts (via SH2 domain) with ZAP70 (phosphorylated) and CD3Z (phosphorylated). Interacts (via SH2 domain) with CSF1R (phosphorylated). In terms of processing, phosphorylated by CSF1R. In terms of tissue distribution, mainly expressed in immune system. Highly expressed in spleen and thymus and expressed at intermediate levels in lung. Not expressed in liver, heart and brain. Isoform 1 is predominant in lung and spleen, while isoform 2 is predominant in thymus.

The protein resides in the cytoplasm. Its subcellular location is the cell membrane. The protein localises to the cytoplasmic vesicle. It is found in the late endosome. Its function is as follows. Adapter protein, which negatively regulates T-cell receptor (TCR) signaling. Inhibits T-cell antigen-receptor induced activation of nuclear factor of activated T-cells. May act by linking signaling proteins such as ZAP70 with CBL, leading to a CBL dependent degradation of signaling proteins. The chain is Src-like-adapter 2 (Sla2) from Mus musculus (Mouse).